A 324-amino-acid chain; its full sequence is MKNAKMIGFGLYTPKNLVENERLQEFLETSDEWIRTRTGIERRYISLDENTSDLAVEASKKALNQAGLSAEDIDLIILATVTPDNFTPSTACIVQDKLGAKNAWAFDINAACTGFIYALKLGRSLIRSGEAKNALIIGAETLSKALNWEDRGSCVLFGDGAGATVLTSTEEDCGIKCVNVKSDGSKGDSLVIQGLPLNSPFKDGREVSENYINMNGREIFKFATKVMEESIVEILEKENIKIEDIDAIIPHQANLRIIDYVVKRLGIPREKFITNLQNYGNTSGASIPIALCESINEGNLKKGDNIIMVGFGGGLTWGAALIKL.

Residues Cys112 and His251 contribute to the active site. Positions 252–256 (QANLR) are ACP-binding. Asn281 is a catalytic residue.

Belongs to the thiolase-like superfamily. FabH family. In terms of assembly, homodimer.

It is found in the cytoplasm. The catalysed reaction is malonyl-[ACP] + acetyl-CoA + H(+) = 3-oxobutanoyl-[ACP] + CO2 + CoA. Its pathway is lipid metabolism; fatty acid biosynthesis. Functionally, catalyzes the condensation reaction of fatty acid synthesis by the addition to an acyl acceptor of two carbons from malonyl-ACP. Catalyzes the first condensation reaction which initiates fatty acid synthesis and may therefore play a role in governing the total rate of fatty acid production. Possesses both acetoacetyl-ACP synthase and acetyl transacylase activities. Its substrate specificity determines the biosynthesis of branched-chain and/or straight-chain of fatty acids. This Clostridium perfringens (strain ATCC 13124 / DSM 756 / JCM 1290 / NCIMB 6125 / NCTC 8237 / Type A) protein is Beta-ketoacyl-[acyl-carrier-protein] synthase III.